We begin with the raw amino-acid sequence, 141 residues long: Brain ribonuclease (141 aa).

The tract at residues 1–25 (KETAAAKFRRQHMDSGSSSSSNSNY) is disordered. Positions 7 and 10 each coordinate substrate. Residue His12 is the Proton acceptor of the active site. A compositionally biased stretch (low complexity) spans 15-24 (SGSSSSSNSN). 4 cysteine pairs are disulfide-bonded: Cys26–Cys84, Cys40–Cys95, Cys58–Cys110, and Cys65–Cys72. Position 41–45 (41–45 (KPVNT)) interacts with substrate. A glycan (N-linked (GlcNAc...) asparagine) is linked at Asn62. Substrate contacts are provided by Lys66 and Arg85. His119 serves as the catalytic Proton donor. Thr129 carries an O-linked (GalNAc...) threonine glycan.

Belongs to the pancreatic ribonuclease family.

Its subcellular location is the secreted. In Giraffa camelopardalis (Giraffe), this protein is Brain ribonuclease (BRN).